The primary structure comprises 127 residues: Large ribosomal subunit protein bL12 (127 aa).

This sequence belongs to the bacterial ribosomal protein bL12 family. Homodimer. Part of the ribosomal stalk of the 50S ribosomal subunit. Forms a multimeric L10(L12)X complex, where L10 forms an elongated spine to which 2 to 4 L12 dimers bind in a sequential fashion. Binds GTP-bound translation factors.

Forms part of the ribosomal stalk which helps the ribosome interact with GTP-bound translation factors. Is thus essential for accurate translation. This Thiobacillus denitrificans (strain ATCC 25259 / T1) protein is Large ribosomal subunit protein bL12.